A 291-amino-acid polypeptide reads, in one-letter code: Meteorin (291 aa).

Positions 1 to 21 (MLVATLLCALCCGLLAASAHA) are cleaved as a signal peptide. Cystine bridges form between C28–C49, C80–C116, C169–C240, C172–C264, and C182–C286.

This sequence belongs to the meteorin family. In terms of assembly, monomer. As to expression, highly expressed in brain. Expressed in undifferentiated neural progenitors and in astrocyte lineage, particularly in Bergmann glia, a subtype of radial glia, and a few discrete neuronal populations residing in the superior colliculus, the ocular motor nucleus, the raphe and pontine nuclei, and in various thalamic nuclei. Weakly expressed in heart, kidney, skeletal muscle, spleen, testis, gut and lung.

Its subcellular location is the secreted. Involved in both glial cell differentiation and axonal network formation during neurogenesis. Promotes astrocyte differentiation and transforms cerebellar astrocytes into radial glia. Also induces axonal extension in small and intermediate neurons of sensory ganglia by activating nearby satellite glia. This Mus musculus (Mouse) protein is Meteorin (Metrn).